The chain runs to 177 residues: Putative acetyltransferase FG08082 (177 aa).

Residues Glu-81 to Gly-174 enclose the N-acetyltransferase domain.

It belongs to the acetyltransferase family.

Its pathway is mycotoxin biosynthesis. In terms of biological role, putative acetyltransferase; part of the gene cluster that mediates the biosynthesis of butenolide, a mycotoxin that shows antibiotic activity but does not seem to play a major role in the spread of head blight in wheat. Butenolide is derived from glutamic acid via a 4-acetamido-2-butenoic acid intermediate. The predicted function of the NADH:flavin oxidoreductase FG08077, the cytochrome P450 monooxygenase FG08079, the decarboxylase FG08083, and the putative acetyltransferase FG08082 are consistent with this pathway, however, the respective activities of the butelonide biosynthesis cluster enzymes have still to be experimentally determined. The chain is Putative acetyltransferase FG08082 from Gibberella zeae (strain ATCC MYA-4620 / CBS 123657 / FGSC 9075 / NRRL 31084 / PH-1) (Wheat head blight fungus).